The sequence spans 269 residues: Formamidopyrimidine-DNA glycosylase (269 aa).

Catalysis depends on Pro-2, which acts as the Schiff-base intermediate with DNA. Catalysis depends on Glu-3, which acts as the Proton donor. Lys-57 acts as the Proton donor; for beta-elimination activity in catalysis. The DNA site is built by His-90, Arg-109, and Lys-150. An FPG-type zinc finger spans residues 235–269 (QVYGRKGEPCRVCGTPIVATKHAQRATFYCRHCQK). Arg-259 serves as the catalytic Proton donor; for delta-elimination activity.

Belongs to the FPG family. In terms of assembly, monomer. Zn(2+) is required as a cofactor.

The enzyme catalyses Hydrolysis of DNA containing ring-opened 7-methylguanine residues, releasing 2,6-diamino-4-hydroxy-5-(N-methyl)formamidopyrimidine.. The catalysed reaction is 2'-deoxyribonucleotide-(2'-deoxyribose 5'-phosphate)-2'-deoxyribonucleotide-DNA = a 3'-end 2'-deoxyribonucleotide-(2,3-dehydro-2,3-deoxyribose 5'-phosphate)-DNA + a 5'-end 5'-phospho-2'-deoxyribonucleoside-DNA + H(+). Involved in base excision repair of DNA damaged by oxidation or by mutagenic agents. Acts as a DNA glycosylase that recognizes and removes damaged bases. Has a preference for oxidized purines, such as 7,8-dihydro-8-oxoguanine (8-oxoG). Has AP (apurinic/apyrimidinic) lyase activity and introduces nicks in the DNA strand. Cleaves the DNA backbone by beta-delta elimination to generate a single-strand break at the site of the removed base with both 3'- and 5'-phosphates. This is Formamidopyrimidine-DNA glycosylase from Salmonella choleraesuis (strain SC-B67).